A 902-amino-acid chain; its full sequence is Alanine--tRNA ligase (902 aa).

Residues histidine 567, histidine 571, cysteine 671, and histidine 675 each coordinate Zn(2+).

Belongs to the class-II aminoacyl-tRNA synthetase family. Zn(2+) is required as a cofactor.

The protein localises to the cytoplasm. The enzyme catalyses tRNA(Ala) + L-alanine + ATP = L-alanyl-tRNA(Ala) + AMP + diphosphate. Its function is as follows. Catalyzes the attachment of alanine to tRNA(Ala) in a two-step reaction: alanine is first activated by ATP to form Ala-AMP and then transferred to the acceptor end of tRNA(Ala). Also edits incorrectly charged Ser-tRNA(Ala) and Gly-tRNA(Ala) via its editing domain. This is Alanine--tRNA ligase from Mycoplasmoides gallisepticum (strain R(low / passage 15 / clone 2)) (Mycoplasma gallisepticum).